The sequence spans 415 residues: Serine hydroxymethyltransferase (415 aa).

Residues leucine 117 and 121–123 (GHL) each bind (6S)-5,6,7,8-tetrahydrofolate. N6-(pyridoxal phosphate)lysine is present on lysine 226. Residues glutamate 241 and 349 to 351 (SPF) contribute to the (6S)-5,6,7,8-tetrahydrofolate site.

The protein belongs to the SHMT family. As to quaternary structure, homodimer. The cofactor is pyridoxal 5'-phosphate.

The protein localises to the cytoplasm. It catalyses the reaction (6R)-5,10-methylene-5,6,7,8-tetrahydrofolate + glycine + H2O = (6S)-5,6,7,8-tetrahydrofolate + L-serine. The protein operates within one-carbon metabolism; tetrahydrofolate interconversion. Its pathway is amino-acid biosynthesis; glycine biosynthesis; glycine from L-serine: step 1/1. Its function is as follows. Catalyzes the reversible interconversion of serine and glycine with tetrahydrofolate (THF) serving as the one-carbon carrier. This reaction serves as the major source of one-carbon groups required for the biosynthesis of purines, thymidylate, methionine, and other important biomolecules. Also exhibits THF-independent aldolase activity toward beta-hydroxyamino acids, producing glycine and aldehydes, via a retro-aldol mechanism. This chain is Serine hydroxymethyltransferase, found in Geotalea uraniireducens (strain Rf4) (Geobacter uraniireducens).